The primary structure comprises 118 residues: UPF0148 protein LS215_1455 (118 aa).

Belongs to the UPF0148 family.

The sequence is that of UPF0148 protein LS215_1455 from Saccharolobus islandicus (strain L.S.2.15 / Lassen #1) (Sulfolobus islandicus).